A 491-amino-acid polypeptide reads, in one-letter code: Immediate early protein IE1 (491 aa).

Over residues 1-11 (MESSAKRKMDP) the composition is skewed to basic and acidic residues. Residues 1 to 24 (MESSAKRKMDPDNPDEGPSSKVPR) form a nuclear localization signal region. Positions 1–30 (MESSAKRKMDPDNPDEGPSSKVPRPETPVT) are disordered. The interaction with host PML, interference with PML sumoylation and disruption of PML-associated nuclear bodies stretch occupies residues 132–346 (ILDKVHEPFE…SVMKRRIEEI (215 aa)). The tract at residues 373 to 445 (AIAEESDEEE…EEGAQEERED (73 aa)) is interaction with host STAT2. The modulation of STAT3/STAT1 signaling stretch occupies residues 410–420 (ATIPLSSVIVA). The interval 410–445 (ATIPLSSVIVAENSDQEESEQSDEEEEEGAQEERED) is interaction with host STAT3. Positions 421 to 472 (ENSDQEESEQSDEEEEEGAQEEREDTVSVKSEPVSEIEEVAPEEEEDGAEEP) are acidic. The interval 421-491 (ENSDQEESEQ…PMVTRSKADQ (71 aa)) is disordered. Over residues 423 to 444 (SDQEESEQSDEEEEEGAQEERE) the composition is skewed to acidic residues. The segment at 449-452 (VKSE) is interaction with host SUMO1. Lysine 450 participates in a covalent cross-link: Glycyl lysine isopeptide (Lys-Gly) (interchain with G-Cter in SUMO). Residues 455–470 (SEIEEVAPEEEEDGAE) are compositionally biased toward acidic residues. The tract at residues 475–491 (SGGKSTHPMVTRSKADQ) is chromosome-tethering domain (CTD), binding to histones.

It belongs to the HHV-5 IE1 protein family. In terms of assembly, forms homodimers. Interacts with human p53/TP53; this interaction inhibits p53/TP53-dependent transactivation activity. Interacts with host STAT1. Interacts with host STAT2; this interaction promotes viral growth and counteracts the antiviral interferon response. May also interact with the host STAT1-STAT2 heterodimer. Interacts with host STAT3; this interaction leads to STAT3 nuclear accumulation and disruption of IL6-induced STAT3 phosphorylation. Interacts with host PML; this interaction inhibits host PML de novo sumoylation and probably inhibits PML regulation of type I and type II interferon-induced gene expression. Interacts with host DAXX. Interacts with host SP100. Interacts with host E2F1. Interacts with host RB1. Interacts with host HDAC1; this interaction inhibits histone deacetylation and promotes viral transcription. Interacts with host HDAC2; this interaction inhibits histone deacetylation and promotes viral transcription. Interacts with host HDAC3; this interaction inhibits histone deacetylation and promotes viral transcription. Interacts with host PLSCR1; this interaction inhibits IE1 transactivating activity. Sumoylated by host PML. Sumoylation abolishes the interaction with host STAT2 and thus the IE1-mediated repression of interferon-stimulated genes.

The protein localises to the host nucleus. Functionally, plays an important role in transactivating viral early genes as well as activating its own promoter, probably by altering the viral chromatin structure. Expression of IE1 and IE2 proteins is critical for the establishment of lytic infection and reactivation from viral latency. Disrupts PML-associated ND10 nuclear bodies by interfering with host PML and SP100 sumoylation thereby altering the regulation of type I and type II interferon-induced gene expression. Promotes efficient viral growth by interacting with and directing host SP100 to degradation, leading to enhanced acetylation level of histones. In addition, functions in counteracting the host innate antiviral response. Inhibits the type I interferon pathway by directly interacting with and sequestrating host STAT2. Also targets type II interferon pathway by repressing IL6- and STAT3 target genes. Repression of STAT3 genes is due to STAT3 nuclear accumulation and disruption of IL6-induced STAT3 phosphorylation by IE1. This repression is followed by phosphorylation and activation of STAT1. Inhibits host ISG transcription by sequestering host ISGF3 in a PML- and STAT2- binding dependent manner. Alters host cell cycle progression, probably through its interaction with host E2F1 or RB1 that overcomes the RB1-mediated repression of E2F-responsive promoters. This Human cytomegalovirus (strain AD169) (HHV-5) protein is Immediate early protein IE1 (UL123).